A 790-amino-acid polypeptide reads, in one-letter code: MNHWLAFLNKPESLKEQNSDCDQQGEMRHVTDGTLTKSPESKPFRERRSQTWIDSEVPTSTEKSNVQESISSDIISKLSNRRSRRNRSESWAGSEASSPSGNISTLENATEKNTLKSPNKFLQRGGLPTVGIGSQALSPAGKPSTLGNVSPGKFTTYKVHNSIEVNRFSSTPTKLLTNPHKVAAISNDEHYVVSNESLEENIEVAHLENVFRSSKTPDEEQSEYMKLGEIRLSSSSYGGSISKENSLPKVLDELQSQNEEIKALRQKLEEKDDRIQELEELNSMNDAKLQRIEDLQKEFHNERKAASKRLNIVQDRFRKEIKKIREEKITDFQNKNASKKEKNEVTSAKTKCKAFSQRNILVSELYRKQKQILNLQQENDKFLKDINESNNSIVKLRSEVEILKSNLQLSQDENKKLHDNGSFYEKRLNDVYSYMQNLSLFEKDLGKFILEEMKCGHSPSMFQNGFAKLYPDFQDIKNLENMEQYKQLKGKIELLEKNDRIRLEKIISVFKLINERLHFMQQQHSHKIKYLQKEALTKEQQFRLEKRRWHDILNLKEENFQKLKSELKEKLILSEKIQKNAEDKLNDYMNEHQEIVEKLQNQALIASRWSTQIQESENTHKKITDELAGKQSEILKLEETILSLKEDVFQEKLNLKKLYGDPSTELNFETVGKSFPHITKEKYDSLGLDILTDLTYVQSQNLIKNLLIVLDIPLKTFLKIVPTIVIQLRCELTLLTKFANDLNLKVFGKQLDFKSRRKVAMNEFLNNHDIAEVKHPLEYDLQALFKYFFS.

Positions 8-122 (LNKPESLKEQ…NTLKSPNKFL (115 aa)) are disordered. Basic and acidic residues predominate over residues 39–49 (PESKPFRERRS). Polar residues-rich tracts occupy residues 50–78 (QTWIDSEVPTSTEKSNVQESISSDIISKL) and 89–108 (ESWAGSEASSPSGNISTLEN). 4 coiled-coil regions span residues 241–328 (ISKE…REEK), 361–430 (LVSE…RLND), 477–498 (KNLENMEQYKQLKGKIELLEKN), and 540–658 (QQFR…LKKL).

As to quaternary structure, interacts directly with SSP1. Probable component of a SPB complex composed of ADY3, SSP1, DON1, MPC54, SPO21/MPC70, NUD1 and CNM67. Phosphorylated.

It localises to the prospore membrane. The protein resides in the cytoplasm. It is found in the cytoskeleton. The protein localises to the microtubule organizing center. Its subcellular location is the spindle pole body. In terms of biological role, involved in the pathway that organizes the prospore membrane (PSM) during sporulation. Mediates the assembly of the DON1 ring structure at the leading edge of PSM during meiosis II. May constitute a physical link between SSP1-containing PSM precursors and the spindle pole body (SPB) and may facilitate the recruitment of other factors that are required to promote spore wall formation. In Saccharomyces cerevisiae (strain ATCC 204508 / S288c) (Baker's yeast), this protein is Accumulates dyads protein 3 (ADY3).